We begin with the raw amino-acid sequence, 136 residues long: Large ribosomal subunit protein uL16 (136 aa).

The protein belongs to the universal ribosomal protein uL16 family. In terms of assembly, part of the 50S ribosomal subunit.

Binds 23S rRNA and is also seen to make contacts with the A and possibly P site tRNAs. This chain is Large ribosomal subunit protein uL16, found in Buchnera aphidicola subsp. Acyrthosiphon pisum (strain 5A).